We begin with the raw amino-acid sequence, 532 residues long: Intercellular adhesion molecule 1 (532 aa).

Positions 1-27 (MAPSSPRPALPALLVLLGALFPGPGNA) are cleaved as a signal peptide. Over 28–480 (QTSVSPPKVI…TVNVLSPRYE (453 aa)) the chain is Extracellular. Ig-like C2-type domains lie at 41–103 (GGSV…QSTA) and 128–193 (GKDL…LDLR). 3 disulfide bridges follow: Cys-48–Cys-92, Cys-52–Cys-96, and Cys-135–Cys-186. Asn-145 is a glycosylation site (N-linked (GlcNAc...) asparagine). A Cell attachment site; atypical motif is present at residues 152 to 154 (RGE). N-linked (GlcNAc...) asparagine glycosylation is found at Asn-183, Asn-202, Asn-267, and Asn-296. 2 consecutive Ig-like C2-type domains span residues 230–297 (DTQG…LGNQ) and 325–378 (GTEV…LEVA). Cys-237 and Cys-290 are joined by a disulfide. An intrachain disulfide couples Cys-332 to Cys-371. Residues Asn-385 and Asn-406 are each glycosylated (N-linked (GlcNAc...) asparagine). 3 cysteine pairs are disulfide-bonded: Cys-403–Cys-419, Cys-419–Cys-457, and Cys-431–Cys-457. An Ig-like C2-type 5 domain is found at 412-464 (NSQQTPMCQASGNPLPELKCLKDGTFPLPVGESVTVTRDLEGTYLCRARSTQG). Residues 481 to 503 (IVIITVVAAAVIMGTAGLSTYLY) traverse the membrane as a helical segment. Topologically, residues 504 to 532 (NRQRKIRKYRLQQAQKGTPMKPNTQATPP) are cytoplasmic. 2 positions are modified to phosphothreonine: Thr-521 and Thr-530.

The protein belongs to the immunoglobulin superfamily. ICAM family. As to quaternary structure, homodimer. Interacts with MUC1 and promotes cell aggregation in epithelial cells. Interacts with ARHGEF26/SGEF. Interacts (on T cell side) with CD81, CD247 and CD9 at immunological synapses between antigen-presenting cells and T cells. Monoubiquitinated, which is promoted by MARCH9 and leads to endocytosis.

It localises to the membrane. Functionally, ICAM proteins are ligands for the leukocyte adhesion protein LFA-1 (integrin alpha-L/beta-2). During leukocyte trans-endothelial migration, ICAM1 engagement promotes the assembly of endothelial apical cups through ARHGEF26/SGEF and RHOG activation. This chain is Intercellular adhesion molecule 1 (ICAM1), found in Pan paniscus (Pygmy chimpanzee).